A 374-amino-acid polypeptide reads, in one-letter code: UPF0754 membrane protein SAR1937 (374 aa).

Transmembrane regions (helical) follow at residues 4–24 and 354–374; these read LFII…TNVI and SLGF…AIFV.

This sequence belongs to the UPF0754 family.

It localises to the cell membrane. This Staphylococcus aureus (strain MRSA252) protein is UPF0754 membrane protein SAR1937.